The following is a 340-amino-acid chain: Glucokinase (340 aa).

17-22 contributes to the ATP binding site; the sequence is GDIGGT.

Belongs to the bacterial glucokinase family.

The protein resides in the cytoplasm. The enzyme catalyses D-glucose + ATP = D-glucose 6-phosphate + ADP + H(+). In Allorhizobium ampelinum (strain ATCC BAA-846 / DSM 112012 / S4) (Agrobacterium vitis (strain S4)), this protein is Glucokinase.